The primary structure comprises 356 residues: DNA integrity scanning protein DisA (356 aa).

The 139-residue stretch at 11–149 (VHTMRDTLQR…EGKSHILEEP (139 aa)) folds into the DAC domain. ATP contacts are provided by residues Gly-78, Leu-96, and 109–113 (TRHRS).

Belongs to the DisA family. As to quaternary structure, homooctamer. Mg(2+) is required as a cofactor.

The enzyme catalyses 2 ATP = 3',3'-c-di-AMP + 2 diphosphate. Participates in a DNA-damage check-point. DisA forms globular foci that rapidly scan along the chromosomes searching for lesions. In terms of biological role, also has diadenylate cyclase activity, catalyzing the condensation of 2 ATP molecules into cyclic di-AMP (c-di-AMP). c-di-AMP likely acts as a signaling molecule that may couple DNA integrity with a cellular process. This chain is DNA integrity scanning protein DisA, found in Corynebacterium efficiens (strain DSM 44549 / YS-314 / AJ 12310 / JCM 11189 / NBRC 100395).